A 651-amino-acid chain; its full sequence is Beta-glucuronidase (651 aa).

An N-terminal signal peptide occupies residues 1-22 (MLRGPAAVWAALGPLLWACGLA). N-linked (GlcNAc...) asparagine glycosylation is found at Asn172 and Asn419. Catalysis depends on Glu450, which acts as the Proton donor. A glycan (N-linked (GlcNAc...) asparagine) is linked at Asn630.

Belongs to the glycosyl hydrolase 2 family. Homotetramer.

The protein resides in the lysosome. It catalyses the reaction a beta-D-glucuronoside + H2O = D-glucuronate + an alcohol. With respect to regulation, inhibited by L-aspartic acid. Plays an important role in the degradation of dermatan and keratan sulfates. The sequence is that of Beta-glucuronidase (GUSB) from Felis catus (Cat).